The sequence spans 119 residues: Small ribosomal subunit protein bS16 (119 aa).

Positions 81–119 (GLAKRPARNNPKKAEPGQKAKERAAARAEKAGAGDDAAA) are disordered. Residues 92 to 113 (KKAEPGQKAKERAAARAEKAGA) are compositionally biased toward basic and acidic residues.

It belongs to the bacterial ribosomal protein bS16 family.

In Methylobacterium sp. (strain 4-46), this protein is Small ribosomal subunit protein bS16.